Reading from the N-terminus, the 444-residue chain is Methylenetetrahydrofolate--tRNA-(uracil-5-)-methyltransferase TrmFO (444 aa).

10 to 15 lines the FAD pocket; that stretch reads GAGLAG.

It belongs to the MnmG family. TrmFO subfamily. FAD serves as cofactor.

Its subcellular location is the cytoplasm. The catalysed reaction is uridine(54) in tRNA + (6R)-5,10-methylene-5,6,7,8-tetrahydrofolate + NADH + H(+) = 5-methyluridine(54) in tRNA + (6S)-5,6,7,8-tetrahydrofolate + NAD(+). The enzyme catalyses uridine(54) in tRNA + (6R)-5,10-methylene-5,6,7,8-tetrahydrofolate + NADPH + H(+) = 5-methyluridine(54) in tRNA + (6S)-5,6,7,8-tetrahydrofolate + NADP(+). Functionally, catalyzes the folate-dependent formation of 5-methyl-uridine at position 54 (M-5-U54) in all tRNAs. The polypeptide is Methylenetetrahydrofolate--tRNA-(uracil-5-)-methyltransferase TrmFO (Streptococcus pneumoniae (strain Taiwan19F-14)).